Here is a 222-residue protein sequence, read N- to C-terminus: Putative germin-like protein 3-2 (222 aa).

A signal peptide spans 1–22; the sequence is MAKLILATFAVVFLALAATSLA. Cys-32 and Cys-50 are oxidised to a cystine. 2 N-linked (GlcNAc...) asparagine glycosylation sites follow: Asn-55 and Asn-71. The region spanning 64–212 is the Cupin type-1 domain; that stretch reads DGLTNAGNTT…AFQVDGGMVE (149 aa). Mn(2+)-binding residues include His-112, His-114, Glu-119, and His-158. The N-linked (GlcNAc...) asparagine glycan is linked to Asn-165.

The protein belongs to the germin family. Oligomer (believed to be a pentamer but probably hexamer).

It localises to the secreted. The protein resides in the extracellular space. It is found in the apoplast. May play a role in plant defense. Probably has no oxalate oxidase activity even if the active site is conserved. This is Putative germin-like protein 3-2 from Oryza sativa subsp. japonica (Rice).